Reading from the N-terminus, the 359-residue chain is Protein RecA (359 aa).

69 to 76 (GPESSGKT) contacts ATP. The interval 337–359 (SANSVAKASEEDEEEEVDLEPEE) is disordered. The span at 346-359 (EEDEEEEVDLEPEE) shows a compositional bias: acidic residues.

Belongs to the RecA family.

The protein localises to the cytoplasm. In terms of biological role, can catalyze the hydrolysis of ATP in the presence of single-stranded DNA, the ATP-dependent uptake of single-stranded DNA by duplex DNA, and the ATP-dependent hybridization of homologous single-stranded DNAs. It interacts with LexA causing its activation and leading to its autocatalytic cleavage. The protein is Protein RecA of Nostoc punctiforme (strain ATCC 29133 / PCC 73102).